The following is a 415-amino-acid chain: Probable RAD2-like endonuclease 369L (415 aa).

The segment at 1 to 114 (MGIKNLTKFI…EDVKKKTLSL (114 aa)) is N-domain. Mg(2+) is bound by residues D34, E86, E198, E200, D219, D221, and D277. Positions 163–297 (VKQRHRYDIR…VKSYELIKVQ (135 aa)) are I-domain.

Belongs to the XPG/RAD2 endonuclease family. It depends on Mg(2+) as a cofactor.

The protein resides in the host nucleus. Functionally, probable endonuclease. This is Probable RAD2-like endonuclease 369L from Acheta domesticus (House cricket).